We begin with the raw amino-acid sequence, 59 residues long: Light-harvesting protein B-800-850 alpha chain E (59 aa).

Residues M1 to K11 are Cytoplasmic-facing. The chain crosses the membrane as a helical span at residues P12–L35. H31 lines the a bacteriochlorophyll pocket. Over S36 to G59 the chain is Periplasmic.

The protein belongs to the antenna complex alpha subunit family. The core complex is formed by different alpha and beta chains, binding bacteriochlorophyll molecules, and arranged most probably in tetrameric structures disposed around the reaction center. The non-pigmented gamma chains may constitute additional components.

The protein localises to the cell inner membrane. Its function is as follows. Antenna complexes are light-harvesting systems, which transfer the excitation energy to the reaction centers. The polypeptide is Light-harvesting protein B-800-850 alpha chain E (pucAE) (Rhodopseudomonas palustris (strain ATCC BAA-98 / CGA009)).